The following is an 855-amino-acid chain: Protein KRI1 homolog (855 aa).

6 disordered regions span residues 47–67 (VSES…VDPK), 82–117 (KDPC…KAKP), 130–196 (EHNG…KTKE), 312–342 (SLRR…MKEL), 424–453 (YDPR…CDYD), and 589–855 (KSLY…KKDN). The span at 48 to 64 (SESEFDSDSSSSEEDEV) shows a compositional bias: acidic residues. The span at 82 to 91 (KDPCIYDKGT) shows a compositional bias: basic and acidic residues. Phosphoserine occurs at positions 95, 97, 98, 137, and 138. A compositionally biased stretch (basic and acidic residues) spans 160-176 (EEERRLKAEFRKVMNKE). The residue at position 179 (Ser-179) is a Phosphoserine. Residues 307 to 362 (RTIEQSLRRTDDKRKEKRKELKERKDQEKQQKMKELELVKEMKRKEIDEKIRKLKA) adopt a coiled-coil conformation. The segment covering 441 to 452 (CEDDDFNMDCDY) has biased composition (acidic residues). Low complexity predominate over residues 609–619 (VTPAEATAPAE). Residues 630-640 (KSKRKRLKRKA) are compositionally biased toward basic residues. Composition is skewed to basic and acidic residues over residues 650–664 (VLKE…KEAD) and 674–692 (SSKK…DANQ). Composition is skewed to polar residues over residues 720–748 (VQNG…TTES), 756–773 (SNGN…QQRQ), and 792–805 (ANGT…NQKP). Residues 812 to 826 (KKTNNFKAKNKQNNN) are compositionally biased toward low complexity. A compositionally biased stretch (basic residues) spans 842 to 855 (RKFHKREKYGKKDN).

This sequence belongs to the KRI1 family.

The protein is Protein KRI1 homolog of Drosophila melanogaster (Fruit fly).